Consider the following 102-residue polypeptide: Large ribosomal subunit protein bL21 (102 aa).

The protein belongs to the bacterial ribosomal protein bL21 family. Part of the 50S ribosomal subunit. Contacts protein L20.

This protein binds to 23S rRNA in the presence of protein L20. The protein is Large ribosomal subunit protein bL21 of Photorhabdus laumondii subsp. laumondii (strain DSM 15139 / CIP 105565 / TT01) (Photorhabdus luminescens subsp. laumondii).